The sequence spans 67 residues: Beta-defensin 123 (67 aa).

Positions 1–20 are cleaved as a signal peptide; the sequence is MKLLLLTLTVLLLLSQLTPG. 3 disulfide bridges follow: cysteine 25–cysteine 52, cysteine 32–cysteine 46, and cysteine 36–cysteine 53.

The protein belongs to the beta-defensin family. In terms of tissue distribution, abundant expression in the male reproductive tract only. Expressed abundantly in testis, while expression in epididymis decreased gradually from caput to cauda.

The protein resides in the secreted. Functionally, has antibacterial activity. The sequence is that of Beta-defensin 123 (DEFB123) from Macaca mulatta (Rhesus macaque).